Consider the following 872-residue polypeptide: Cellulose synthase catalytic subunit [UDP-forming] (872 aa).

A run of 4 helical transmembrane segments spans residues 30–50 (SAFS…FIPL), 151–171 (ILGI…TQPF), 173–193 (PLAQ…VRRM), and 230–250 (LVCG…LVLG). The tract at residues 271-364 (LWPSVDIFVP…FVSIFDCDHV (94 aa)) is catalytic subdomain A. Asp313 is an active-site residue. Residues Asp360 and Asp362 each contribute to the substrate site. A catalytic subdomain B region spans residues 441-501 (KPLDEIGGIA…GQRIRWARGM (61 aa)). The active site involves Asp457. A run of 5 helical transmembrane segments spans residues 525–545 (VNAM…TAPL), 547–567 (FLLL…LFVL), 592–612 (IYET…LINP), 640–660 (IFLV…YFYG), and 668–688 (VVVS…AVAV). Residues 694–790 (QVRRSHRVEM…QHIDFVQCTF (97 aa)) enclose the PilZ domain. Residues 833 to 853 (SVKGIFRVLTSLVSWVVSFIP) traverse the membrane as a helical segment.

This sequence belongs to the glycosyltransferase 2 family. It depends on Mg(2+) as a cofactor.

It localises to the cell inner membrane. The enzyme catalyses [(1-&gt;4)-beta-D-glucosyl](n) + UDP-alpha-D-glucose = [(1-&gt;4)-beta-D-glucosyl](n+1) + UDP + H(+). Its pathway is glycan metabolism; bacterial cellulose biosynthesis. Activated by bis-(3'-5') cyclic diguanylic acid (c-di-GMP). In terms of biological role, catalytic subunit of cellulose synthase. It polymerizes uridine 5'-diphosphate glucose to cellulose, which is produced as an extracellular component for mechanical and chemical protection at the onset of the stationary phase, when the cells exhibit multicellular behavior (rdar morphotype). Coexpression of cellulose and thin aggregative fimbriae leads to a hydrophobic network with tightly packed cells embedded in a highly inert matrix. The protein is Cellulose synthase catalytic subunit [UDP-forming] (bcsA) of Escherichia coli O157:H7.